A 352-amino-acid chain; its full sequence is Ribosome biogenesis protein BRX1 homolog (352 aa).

A disordered region spans residues Met1–Pro47. Over residues Asp34 to Ile46 the composition is skewed to basic and acidic residues. Residues Glu59–Gly248 enclose the Brix domain. Lys159 participates in a covalent cross-link: Glycyl lysine isopeptide (Lys-Gly) (interchain with G-Cter in SUMO2). Ser260 carries the post-translational modification Phosphoserine. Lys275 carries the post-translational modification N6-acetyllysine. Residues Gln281–Pro301 form a disordered region. Residues Lys313 and Lys321 each participate in a glycyl lysine isopeptide (Lys-Gly) (interchain with G-Cter in SUMO2) cross-link.

It belongs to the BRX1 family.

It localises to the nucleus. It is found in the nucleolus. Required for biogenesis of the 60S ribosomal subunit. This Rattus norvegicus (Rat) protein is Ribosome biogenesis protein BRX1 homolog (Brix1).